The primary structure comprises 1018 residues: Inner centromere protein pic1 (1018 aa).

Ser-171 is modified (phosphoserine). Disordered regions lie at residues 184–207 (VPLR…PKQK), 247–287 (RTKD…SSSP), 306–365 (AKES…PPEI), 522–556 (TRKS…LPPS), 570–756 (EPLH…TSKP), 781–813 (EPDS…EDRK), 848–867 (TKQN…SQSN), and 877–944 (HAPA…LPSW). Polar residues-rich tracts occupy residues 189–199 (TSPSPSETADS) and 268–287 (PSTT…SSSP). The span at 309–320 (SLTSSTRLSTSY) shows a compositional bias: low complexity. 2 stretches are compositionally biased toward polar residues: residues 329–339 (VAFSSETVTSS) and 522–554 (TRKS…SSLP). Basic and acidic residues-rich tracts occupy residues 570–580 (EPLHDDSRQNS) and 624–644 (RSSE…RELS). Residues 645–664 (NNEFPSRQTKTVTSANSSNI) show a composition bias toward polar residues. 2 stretches are compositionally biased toward basic and acidic residues: residues 665-679 (RDME…RSEP) and 692-702 (KPFEEKSEKPT). Polar residues-rich tracts occupy residues 705–719 (RLVT…SWHS) and 784–808 (SVTS…TNSQ). Over residues 890–902 (PSSKSPLLKTPKS) the composition is skewed to low complexity.

Belongs to the INCENP family. As to quaternary structure, component of the CPC complex at least composed of ark1, bir1 and pic1.

The protein localises to the nucleus. It is found in the cytoplasm. Its subcellular location is the cytoskeleton. It localises to the spindle. Component of the chromosomal passenger complex (CPC), a complex that acts as a key regulator of mitosis. Has a role in sister chromatid cohesion and condensation. This is Inner centromere protein pic1 (pic1) from Schizosaccharomyces pombe (strain 972 / ATCC 24843) (Fission yeast).